Here is a 451-residue protein sequence, read N- to C-terminus: Glycine--tRNA ligase (451 aa).

The substrate site is built by arginine 94 and glutamate 164. ATP-binding positions include 196 to 198 (RNE), 206 to 211 (FRTREF), 281 to 282 (EL), and 325 to 328 (GVER). 211–215 (FEQME) is a binding site for substrate. 321-325 (EPSVG) is a substrate binding site.

The protein belongs to the class-II aminoacyl-tRNA synthetase family. In terms of assembly, homodimer.

Its subcellular location is the cytoplasm. The enzyme catalyses tRNA(Gly) + glycine + ATP = glycyl-tRNA(Gly) + AMP + diphosphate. Catalyzes the attachment of glycine to tRNA(Gly). In Mesoplasma florum (strain ATCC 33453 / NBRC 100688 / NCTC 11704 / L1) (Acholeplasma florum), this protein is Glycine--tRNA ligase.